A 302-amino-acid chain; its full sequence is Oxaloacetate decarboxylase 2 (302 aa).

Substrate is bound at residue serine 50. Aspartate 88 lines the Mg(2+) pocket. Residues arginine 159 and histidine 235 each coordinate substrate.

This sequence belongs to the isocitrate lyase/PEP mutase superfamily. Oxaloacetate decarboxylase family. Homotetramer; dimer of dimers. Mg(2+) serves as cofactor.

It catalyses the reaction oxaloacetate + H(+) = pyruvate + CO2. Catalyzes the decarboxylation of oxaloacetate into pyruvate. Seems to play a role in maintaining cellular concentrations of bicarbonate and pyruvate. The polypeptide is Oxaloacetate decarboxylase 2 (Pseudomonas putida (strain W619)).